The sequence spans 397 residues: Na(+)/H(+) antiporter NhaA 2 (397 aa).

11 helical membrane-spanning segments follow: residues 9–29 (LHNPAASGILIFLAAVAAMAV), 59–79 (LLLWINDGLMAVFFLLVGLEL), 95–115 (ILPVVGAVGGIALPAAIYTLI), 125–145 (GWAIPTATDIAFALGILALLG), 154–174 (LFLLTLAIIDDLAAILIIAFF), 177–197 (SELSPASLMIAGSAIGTLILM), 222–242 (SGVHATLAGVVLGFVIPLKGE), 260–280 (VVGLGILPLFAFANAGVSLQG), 292–312 (LGIALGLFLGKQIGVFGFVWL), 332–352 (GVALLCGVGFTMSLFISSLAF), and 371–391 (LGILTGSILSGIFGYILLRFS).

The protein belongs to the NhaA Na(+)/H(+) (TC 2.A.33) antiporter family.

It is found in the cell inner membrane. The catalysed reaction is Na(+)(in) + 2 H(+)(out) = Na(+)(out) + 2 H(+)(in). Functionally, na(+)/H(+) antiporter that extrudes sodium in exchange for external protons. The sequence is that of Na(+)/H(+) antiporter NhaA 2 from Magnetococcus marinus (strain ATCC BAA-1437 / JCM 17883 / MC-1).